The primary structure comprises 178 residues: Nucleoside triphosphate/diphosphate phosphatase (178 aa).

The Proton donor role is filled by arginine 23. The Mg(2+) site is built by asparagine 87, aspartate 103, aspartate 105, aspartate 107, aspartate 120, and glutamate 123.

This sequence belongs to the Ntdp family. The cofactor is Mg(2+).

The enzyme catalyses a ribonucleoside 5'-triphosphate + H2O = a ribonucleoside 5'-diphosphate + phosphate + H(+). The catalysed reaction is a ribonucleoside 5'-diphosphate + H2O = a ribonucleoside 5'-phosphate + phosphate + H(+). Has nucleoside phosphatase activity towards nucleoside triphosphates and nucleoside diphosphates. This is Nucleoside triphosphate/diphosphate phosphatase from Latilactobacillus sakei subsp. sakei (strain 23K) (Lactobacillus sakei subsp. sakei).